A 523-amino-acid chain; its full sequence is MQSVQGTDAMTAPAASLPGSKKVFIKWALLGTVGLINGYATILMYSRGEVAFAMLTVILTALALYVFGSKKTYAHRYIYPGIAGMILFILFPLAYTVGLAFTNYSAKNQLSLDRAQSVLLDRTFQSGESYPFTLYKTDSGHRIVIKDGDVLLSTPEFVLGSAISDLDLSPVDTVSGTAEPIKTIVSNRTALSSIDLHFANGDDIRMSGLRKFAGVVPLYTMQADGETLKNNQTGELLKPNMDVGFYQAMDEAGNFVGNTVSPGFVVQIGTDNFERVWKDDGIKEPFISIFIWTVVFSILTVLLTLMIGLVLASVVQWEELKGRAIYRVLLILPYAVPAFISILIFKGLFNQSFGEINMVLNALFGISPSWFSDPIMAKSMVLIVNTWLGFPYMMILCMGLLKAIPEDLYEASAIDGANFVQNFTRVTLPLMIKPLTPLLIASFAFNFNNFVMIQLLTQGGPNMIGTSEPAGYTDLLVSYTYRIAFEGGGGQDFGLASAIATLIFLLVGALALLNLRFTKLSQN.

Topologically, residues 1-22 (MQSVQGTDAMTAPAASLPGSKK) are cytoplasmic. Residues 23–45 (VFIKWALLGTVGLINGYATILMY) traverse the membrane as a helical segment. Over 46–49 (SRGE) the chain is Periplasmic. Residues 50–69 (VAFAMLTVILTALALYVFGS) form a helical membrane-spanning segment. The Cytoplasmic segment spans residues 70–81 (KKTYAHRYIYPG). The chain crosses the membrane as a helical span at residues 82–104 (IAGMILFILFPLAYTVGLAFTNY). Topologically, residues 105–288 (SAKNQLSLDR…DDGIKEPFIS (184 aa)) are periplasmic. The helical transmembrane segment at 289–311 (IFIWTVVFSILTVLLTLMIGLVL) threads the bilayer. Residues 290–514 (FIWTVVFSIL…LLVGALALLN (225 aa)) enclose the ABC transmembrane type-1 domain. Over 312-322 (ASVVQWEELKG) the chain is Cytoplasmic. A helical membrane pass occupies residues 323–345 (RAIYRVLLILPYAVPAFISILIF). Residues 346–378 (KGLFNQSFGEINMVLNALFGISPSWFSDPIMAK) are Periplasmic-facing. A helical transmembrane segment spans residues 379–401 (SMVLIVNTWLGFPYMMILCMGLL). The Cytoplasmic portion of the chain corresponds to 402–434 (KAIPEDLYEASAIDGANFVQNFTRVTLPLMIKP). A helical transmembrane segment spans residues 435–457 (LTPLLIASFAFNFNNFVMIQLLT). Residues 458-492 (QGGPNMIGTSEPAGYTDLLVSYTYRIAFEGGGGQD) lie on the Periplasmic side of the membrane. Residues 493 to 515 (FGLASAIATLIFLLVGALALLNL) traverse the membrane as a helical segment. Residues 516–523 (RFTKLSQN) lie on the Cytoplasmic side of the membrane.

Belongs to the binding-protein-dependent transport system permease family. MalFG subfamily. In terms of assembly, the complex is composed of two ATP-binding proteins (MalK), two transmembrane proteins (MalG and MalF) and a solute-binding protein (MalE).

It is found in the cell inner membrane. Its function is as follows. Part of the ABC transporter complex MalEFGK involved in maltose/maltodextrin import. Probably responsible for the translocation of the substrate across the membrane. This Vibrio vulnificus (strain CMCP6) protein is Maltose/maltodextrin transport system permease protein MalF (malF).